Reading from the N-terminus, the 184-residue chain is MSWRSESIWIEFITGSRKTSNFCWAFILFLGSLGFLLVGTSSYLGRNVISLFPSQQIIFFPQGIVMSFYGIAGLFISCYLWCTILWNVGSGYDLFDRKEGIVRIFRWGFPGKTRRIFLRFFMKDIQSIRIEVKEGVSARRVLYMEIRGQGAIPLIRTDENFTTREIEQKAAELAYFLRVPIEVF.

2 helical membrane passes run 22 to 42 and 57 to 77; these read FCWA…GTSS and IIFF…LFIS.

This sequence belongs to the Ycf4 family.

The protein localises to the plastid. It is found in the chloroplast thylakoid membrane. Seems to be required for the assembly of the photosystem I complex. The protein is Photosystem I assembly protein Ycf4 of Capsella bursa-pastoris (Shepherd's purse).